The sequence spans 275 residues: HUWE1-associated protein modifying stress responses (275 aa).

Positions 32–44 (AEQDEQLSPELQE) are enriched in acidic residues. 4 disordered regions span residues 32–51 (AEQD…AAAQ), 155–181 (RNSR…SSVE), 204–228 (SVRS…RRNG), and 250–275 (GTRK…NRML). Position 167 is a phosphoserine (serine 167). Low complexity predominate over residues 172 to 181 (TSTETSSSVE). The segment covering 204–221 (SVRSSTPGSPTHVSSGPN) has biased composition (polar residues). At serine 212 the chain carries Phosphoserine.

Belongs to the HAPSTR1 family. As to quaternary structure, homooligomer. Heterooligomer with HAPSTR2; the interaction is direct and stabilizes HAPSTR1. Interacts with HUWE1. Ubiquitinated by HUWE1. Promotes HAPSTR1 degradation through polyubiquitination.

The protein resides in the nucleus. Its subcellular location is the cytoplasm. Acts as a central player within a network of stress response pathways promoting cellular adaptability. The E3 ligase HUWE1 assists HAPSTR1 in controlling stress signaling and in turn, HUWE1 feeds back to promote the degradation of HAPSTR1. HAPSTR1 represents a central coordination mechanism for stress response programs. Functions as a negative regulator of TP53/P53 in the cellular response to telomere erosion and probably also DNA damage. May attenuate p53/TP53 activation through the E3 ubiquitin ligase HUWE1. This chain is HUWE1-associated protein modifying stress responses, found in Mus musculus (Mouse).